A 138-amino-acid chain; its full sequence is ATP synthase epsilon chain (138 aa).

It belongs to the ATPase epsilon chain family. In terms of assembly, F-type ATPases have 2 components, CF(1) - the catalytic core - and CF(0) - the membrane proton channel. CF(1) has five subunits: alpha(3), beta(3), gamma(1), delta(1), epsilon(1). CF(0) has three main subunits: a, b and c.

The protein resides in the cell membrane. Produces ATP from ADP in the presence of a proton gradient across the membrane. This is ATP synthase epsilon chain from Streptococcus suis (strain 98HAH33).